A 444-amino-acid chain; its full sequence is Phosphoglucosamine mutase (444 aa).

The Phosphoserine intermediate role is filled by serine 102. 4 residues coordinate Mg(2+): serine 102, aspartate 241, aspartate 243, and aspartate 245. Position 102 is a phosphoserine (serine 102).

This sequence belongs to the phosphohexose mutase family. The cofactor is Mg(2+). Post-translationally, activated by phosphorylation.

It catalyses the reaction alpha-D-glucosamine 1-phosphate = D-glucosamine 6-phosphate. Functionally, catalyzes the conversion of glucosamine-6-phosphate to glucosamine-1-phosphate. The polypeptide is Phosphoglucosamine mutase (Actinobacillus pleuropneumoniae serotype 5b (strain L20)).